We begin with the raw amino-acid sequence, 1914 residues long: Autophagy-related protein 2 homolog A (1914 aa).

A Chorein N-terminal domain is found at 14–112; that stretch reads ERVCRYLLQH…LTLQPRQGSG (99 aa). Serine 764, serine 869, serine 875, and serine 877 each carry phosphoserine. A disordered region spans residues 1222–1243; it reads DLHPPPRPPSPTEIAGQKLSES. 3 positions are modified to phosphoserine: serine 1246, serine 1282, and serine 1290. The interval 1299 to 1337 is disordered; that stretch reads GERSGAQAPLPPPGASSHTLGSKAKEHENEEEGDGDTLD. Residues 1327–1337 are compositionally biased toward acidic residues; it reads NEEEGDGDTLD. The tract at residues 1337–1383 is WIPI-interacting; that stretch reads DSDEFCILDAPGLGIAPRDGEPIVTQLHPGPIIVHDGHFSQPLGSTD. Residue serine 1381 is modified to Phosphoserine. 3 disordered regions span residues 1427–1452, 1589–1634, and 1803–1822; these read LTGPRVSPSRSSGPNRPQNSWRTQGG, MVPG…SSSD, and RSLQDKRSSRKLRRGQQPAD. Over residues 1429–1446 the composition is skewed to low complexity; the sequence is GPRVSPSRSSGPNRPQNS.

It belongs to the ATG2 family. As to quaternary structure, interacts with ATG9A (via C-terminus). Interacts with TMEM41B. Interacts with VMP1.

The protein resides in the preautophagosomal structure membrane. The protein localises to the lipid droplet. It localises to the endoplasmic reticulum membrane. It carries out the reaction a 1,2-diacyl-sn-glycero-3-phospho-L-serine(in) = a 1,2-diacyl-sn-glycero-3-phospho-L-serine(out). The catalysed reaction is a 1,2-diacyl-sn-glycero-3-phosphoethanolamine(in) = a 1,2-diacyl-sn-glycero-3-phosphoethanolamine(out). Lipid transfer protein involved in autophagosome assembly. Tethers the edge of the isolation membrane (IM) to the endoplasmic reticulum (ER) and mediates direct lipid transfer from ER to IM for IM expansion. Binds to the ER exit site (ERES), which is the membrane source for autophagosome formation, and extracts phospholipids from the membrane source and transfers them to ATG9 (ATG9A or ATG9B) to the IM for membrane expansion. Lipid transfer activity is enhanced by WIPI1 and WDR45/WIPI4, which promote ATG2A-association with phosphatidylinositol 3-monophosphate (PI3P)-containing membranes. Also regulates lipid droplets morphology and distribution within the cell. Its function is as follows. (Microbial infection) Mediates the intracellular lifestyle of Cryptococcus neoformans by supporting infection. The polypeptide is Autophagy-related protein 2 homolog A (Mus musculus (Mouse)).